A 194-amino-acid polypeptide reads, in one-letter code: Protein GrpE (194 aa).

The span at 1–12 shows a compositional bias: polar residues; sequence MSSKEQNTPNEQ. A disordered region spans residues 1–39; sequence MSSKEQNTPNEQASDEIETEQAKNQGADTAAEAADQRDE.

This sequence belongs to the GrpE family. In terms of assembly, homodimer.

The protein localises to the cytoplasm. Participates actively in the response to hyperosmotic and heat shock by preventing the aggregation of stress-denatured proteins, in association with DnaK and GrpE. It is the nucleotide exchange factor for DnaK and may function as a thermosensor. Unfolded proteins bind initially to DnaJ; upon interaction with the DnaJ-bound protein, DnaK hydrolyzes its bound ATP, resulting in the formation of a stable complex. GrpE releases ADP from DnaK; ATP binding to DnaK triggers the release of the substrate protein, thus completing the reaction cycle. Several rounds of ATP-dependent interactions between DnaJ, DnaK and GrpE are required for fully efficient folding. In Erwinia tasmaniensis (strain DSM 17950 / CFBP 7177 / CIP 109463 / NCPPB 4357 / Et1/99), this protein is Protein GrpE.